Reading from the N-terminus, the 270-residue chain is UPF0354 protein Bcer98_3354 (270 aa).

Belongs to the UPF0354 family.

The sequence is that of UPF0354 protein Bcer98_3354 from Bacillus cytotoxicus (strain DSM 22905 / CIP 110041 / 391-98 / NVH 391-98).